We begin with the raw amino-acid sequence, 343 residues long: S-adenosylmethionine:tRNA ribosyltransferase-isomerase (343 aa).

This sequence belongs to the QueA family. As to quaternary structure, monomer.

The protein resides in the cytoplasm. It catalyses the reaction 7-aminomethyl-7-carbaguanosine(34) in tRNA + S-adenosyl-L-methionine = epoxyqueuosine(34) in tRNA + adenine + L-methionine + 2 H(+). It participates in tRNA modification; tRNA-queuosine biosynthesis. Transfers and isomerizes the ribose moiety from AdoMet to the 7-aminomethyl group of 7-deazaguanine (preQ1-tRNA) to give epoxyqueuosine (oQ-tRNA). This is S-adenosylmethionine:tRNA ribosyltransferase-isomerase from Syntrophotalea carbinolica (strain DSM 2380 / NBRC 103641 / GraBd1) (Pelobacter carbinolicus).